A 327-amino-acid polypeptide reads, in one-letter code: Annexin A8 (327 aa).

Annexin repeat units lie at residues 21–92 (FNPD…ALMY), 93–164 (PPYR…CLLQ), 177–249 (GLAL…TVVK), and 253–324 (NVHS…NLVG). Met-266, Gly-268, Gly-270, and Asp-310 together coordinate Ca(2+).

This sequence belongs to the annexin family.

This protein is an anticoagulant protein that acts as an indirect inhibitor of the thromboplastin-specific complex, which is involved in the blood coagulation cascade. This is Annexin A8 (Anxa8) from Rattus norvegicus (Rat).